The following is a 226-amino-acid chain: Cytidylate kinase (226 aa).

10–18 (GPAGAGKST) is an ATP binding site.

This sequence belongs to the cytidylate kinase family. Type 1 subfamily.

The protein resides in the cytoplasm. It catalyses the reaction CMP + ATP = CDP + ADP. The enzyme catalyses dCMP + ATP = dCDP + ADP. This is Cytidylate kinase from Caldicellulosiruptor bescii (strain ATCC BAA-1888 / DSM 6725 / KCTC 15123 / Z-1320) (Anaerocellum thermophilum).